The following is an 867-amino-acid chain: Armadillo repeat-containing protein 2 (867 aa).

Disordered regions lie at residues 1–115 and 214–252; these read MLSP…CFSF and TSLPSHLKNGGDQGKRHARASSCPSSSDLSRLQTKAVPK. 3 stretches are compositionally biased toward polar residues: residues 18-28, 40-50, and 60-69; these read PSVSKQKTSAE, VRTQRPFTPQE, and SSRTSENRPP. Composition is skewed to low complexity over residues 70–81 and 234–243; these read SSFSLHASSFES and SSCPSSSDLS. 12 ARM repeats span residues 262–301, 304–344, 363–403, 408–449, 462–503, 506–547, 551–589, 591–616, 619–662, 664–705, 707–746, and 748–790; these read IEVDEVFWNTRIVPILRELEKEENIETVCAACTQLHHALE, NMLG…ALKV, EKND…SIKF, LGFL…HLLV, SLVR…KLTS, DCCT…NLTA, QAREQFSKEKGSIQTLLSLFQTFHQLDLHSQKPVGQRGE, HRAQRPPSEAEDVLIKLTRVLANIAI, GVGP…NLSY, QVKN…NLSQ, HDVCDFIVQNNVHRFMMALLDAQHQDICFSACGVLLNLTV, and KDKR…NFSE.

Expressed at higher level in testis.

Required for sperm flagellum axoneme organization and function. Involved in axonemal central pair complex assembly and/or stability. The sequence is that of Armadillo repeat-containing protein 2 from Homo sapiens (Human).